Consider the following 59-residue polypeptide: uncharacterized protein (59 aa).

This is an uncharacterized protein from Bacillus subtilis (strain 168).